The sequence spans 88 residues: Small ribosomal subunit protein uS15 (88 aa).

This sequence belongs to the universal ribosomal protein uS15 family. In terms of assembly, part of the 30S ribosomal subunit. Forms a bridge to the 50S subunit in the 70S ribosome, contacting the 23S rRNA.

In terms of biological role, one of the primary rRNA binding proteins, it binds directly to 16S rRNA where it helps nucleate assembly of the platform of the 30S subunit by binding and bridging several RNA helices of the 16S rRNA. Its function is as follows. Forms an intersubunit bridge (bridge B4) with the 23S rRNA of the 50S subunit in the ribosome. The polypeptide is Small ribosomal subunit protein uS15 (Paracidovorax citrulli (strain AAC00-1) (Acidovorax citrulli)).